The following is a 549-amino-acid chain: Glucose-6-phosphate isomerase (549 aa).

An N6-acetyllysine mark is found at K80, K228, and K234. E355 functions as the Proton donor in the catalytic mechanism. Residues H386 and K514 contribute to the active site.

Belongs to the GPI family.

The protein resides in the cytoplasm. It carries out the reaction alpha-D-glucose 6-phosphate = beta-D-fructose 6-phosphate. It participates in carbohydrate biosynthesis; gluconeogenesis. The protein operates within carbohydrate degradation; glycolysis; D-glyceraldehyde 3-phosphate and glycerone phosphate from D-glucose: step 2/4. In terms of biological role, catalyzes the reversible isomerization of glucose-6-phosphate to fructose-6-phosphate. The sequence is that of Glucose-6-phosphate isomerase from Shigella flexneri.